Reading from the N-terminus, the 176-residue chain is Ubiquinol-cytochrome c reductase iron-sulfur subunit (176 aa).

A helical membrane pass occupies residues 15–36; that stretch reads FLFVATGAAAAVGGAAALWPFI. In terms of domain architecture, Rieske spans 87–174; it reads ARAVNVASLP…YQFVSDTKIQ (88 aa). Residues C119, H121, C138, and H141 each coordinate [2Fe-2S] cluster. A disulfide bond links C124 and C140.

The protein belongs to the Rieske iron-sulfur protein family. The main subunits of complex b-c1 are: cytochrome b, cytochrome c1 and the Rieske protein. [2Fe-2S] cluster serves as cofactor.

Its subcellular location is the cell membrane. The catalysed reaction is a quinol + 2 Fe(III)-[cytochrome c](out) = a quinone + 2 Fe(II)-[cytochrome c](out) + 2 H(+)(out). Its function is as follows. Component of the ubiquinol-cytochrome c reductase complex (complex III or cytochrome b-c1 complex), which is a respiratory chain that generates an electrochemical potential coupled to ATP synthesis. This Bradyrhizobium diazoefficiens (strain JCM 10833 / BCRC 13528 / IAM 13628 / NBRC 14792 / USDA 110) protein is Ubiquinol-cytochrome c reductase iron-sulfur subunit (petA).